The chain runs to 93 residues: Cell division topological specificity factor (93 aa).

Belongs to the MinE family.

Prevents the cell division inhibition by proteins MinC and MinD at internal division sites while permitting inhibition at polar sites. This ensures cell division at the proper site by restricting the formation of a division septum at the midpoint of the long axis of the cell. This chain is Cell division topological specificity factor, found in Agathobacter rectalis (strain ATCC 33656 / DSM 3377 / JCM 17463 / KCTC 5835 / VPI 0990) (Eubacterium rectale).